The primary structure comprises 226 residues: Imidazole glycerol phosphate synthase subunit HisH (226 aa).

The 209-residue stretch at 6–214 (NIALVDYGVG…VERAASRSAA (209 aa)) folds into the Glutamine amidotransferase type-1 domain. Catalysis depends on Cys-84, which acts as the Nucleophile. Catalysis depends on residues His-189 and Glu-191.

As to quaternary structure, heterodimer of HisH and HisF.

Its subcellular location is the cytoplasm. The enzyme catalyses 5-[(5-phospho-1-deoxy-D-ribulos-1-ylimino)methylamino]-1-(5-phospho-beta-D-ribosyl)imidazole-4-carboxamide + L-glutamine = D-erythro-1-(imidazol-4-yl)glycerol 3-phosphate + 5-amino-1-(5-phospho-beta-D-ribosyl)imidazole-4-carboxamide + L-glutamate + H(+). It carries out the reaction L-glutamine + H2O = L-glutamate + NH4(+). It functions in the pathway amino-acid biosynthesis; L-histidine biosynthesis; L-histidine from 5-phospho-alpha-D-ribose 1-diphosphate: step 5/9. In terms of biological role, IGPS catalyzes the conversion of PRFAR and glutamine to IGP, AICAR and glutamate. The HisH subunit catalyzes the hydrolysis of glutamine to glutamate and ammonia as part of the synthesis of IGP and AICAR. The resulting ammonia molecule is channeled to the active site of HisF. The chain is Imidazole glycerol phosphate synthase subunit HisH from Gloeobacter violaceus (strain ATCC 29082 / PCC 7421).